The sequence spans 507 residues: MYLPIFCIFLSVVDSLRILQIVPGFTNSHVLFNYRLAETLRFLGHDVKMWTQMEMAMLDTGNNKLPEGVSEYRIPIHFTDTLKTEGLKVFQSMMFESGDAHDLWWTGQEFKDMRVEACEQMLRHDESVYEDFRKDGFDVAIAHFHDLCPLAIAKKMNVKRVIWITHGTSIYEFSAVQLGLRTIPSTIPHPLSSAGFSQLFLDRVQNTLWHLSLLDFVNLPQNLLVDENLFYREFVGADQDDLWDLAKTTVPSLLINGDRMLDFPRPLPIHIAFSGELGVSKGKKLVMEKWLEDIIEKPSDGLIVFSLGTVSNTTNMPAQMINSFLGAFGKLKTYTILWRMEKSVAGAEKYENLHLVKWLPQKDIMRHPKMKLMIAHGGYNSFLEAAQAGIPAVLMPLFADQKINAKRAQRYGMATVLDKLDLTINNVYGAIKEALKPEYSTNAKKLSAMLSDQVARKPYSALRYSLKLATSPKPSLFTLKSQHLSFLEFHNLDIFSIVLLTAFIVCF.

An N-terminal signal peptide occupies residues 1-15; it reads MYLPIFCIFLSVVDS. Asn-312 is a glycosylation site (N-linked (GlcNAc...) asparagine). Residues 379–399 traverse the membrane as a helical segment; sequence YNSFLEAAQAGIPAVLMPLFA.

This sequence belongs to the UDP-glycosyltransferase family.

Its subcellular location is the membrane. It carries out the reaction glucuronate acceptor + UDP-alpha-D-glucuronate = acceptor beta-D-glucuronoside + UDP + H(+). The chain is Putative UDP-glucuronosyltransferase ugt-60 (ugt-60) from Caenorhabditis elegans.